The following is a 99-amino-acid chain: Aspartyl/glutamyl-tRNA(Asn/Gln) amidotransferase subunit C (99 aa).

It belongs to the GatC family. As to quaternary structure, heterotrimer of A, B and C subunits.

It carries out the reaction L-glutamyl-tRNA(Gln) + L-glutamine + ATP + H2O = L-glutaminyl-tRNA(Gln) + L-glutamate + ADP + phosphate + H(+). The enzyme catalyses L-aspartyl-tRNA(Asn) + L-glutamine + ATP + H2O = L-asparaginyl-tRNA(Asn) + L-glutamate + ADP + phosphate + 2 H(+). Its function is as follows. Allows the formation of correctly charged Asn-tRNA(Asn) or Gln-tRNA(Gln) through the transamidation of misacylated Asp-tRNA(Asn) or Glu-tRNA(Gln) in organisms which lack either or both of asparaginyl-tRNA or glutaminyl-tRNA synthetases. The reaction takes place in the presence of glutamine and ATP through an activated phospho-Asp-tRNA(Asn) or phospho-Glu-tRNA(Gln). This Mycobacterium marinum (strain ATCC BAA-535 / M) protein is Aspartyl/glutamyl-tRNA(Asn/Gln) amidotransferase subunit C.